Reading from the N-terminus, the 151-residue chain is Large ribosomal subunit protein bL9 (151 aa).

This sequence belongs to the bacterial ribosomal protein bL9 family.

In terms of biological role, binds to the 23S rRNA. The polypeptide is Large ribosomal subunit protein bL9 (Chlorobium phaeovibrioides (strain DSM 265 / 1930) (Prosthecochloris vibrioformis (strain DSM 265))).